Here is a 67-residue protein sequence, read N- to C-terminus: Histone H2A (67 aa).

Gln-60 carries the post-translational modification N5-methylglutamine.

It belongs to the histone H2A family. The nucleosome is a histone octamer containing two molecules each of H2A, H2B, H3 and H4 assembled in one H3-H4 heterotetramer and two H2A-H2B heterodimers. The octamer wraps approximately 147 bp of DNA.

The protein localises to the nucleus. Its subcellular location is the chromosome. Core component of nucleosome. Nucleosomes wrap and compact DNA into chromatin, limiting DNA accessibility to the cellular machineries which require DNA as a template. Histones thereby play a central role in transcription regulation, DNA repair, DNA replication and chromosomal stability. DNA accessibility is regulated via a complex set of post-translational modifications of histones, also called histone code, and nucleosome remodeling. The chain is Histone H2A from Olisthodiscus luteus (Marine phytoflagellate).